We begin with the raw amino-acid sequence, 294 residues long: Cytidine deaminase (294 aa).

CMP/dCMP-type deaminase domains follow at residues 49 to 169 (TPQQ…FGPA) and 188 to 294 (ETQD…YIAL). Position 90 to 92 (90 to 92 (NLE)) interacts with substrate. Histidine 103 serves as a coordination point for Zn(2+). The active-site Proton donor is the glutamate 105. The Zn(2+) site is built by cysteine 130 and cysteine 133.

This sequence belongs to the cytidine and deoxycytidylate deaminase family. As to quaternary structure, homodimer. The cofactor is Zn(2+).

It catalyses the reaction cytidine + H2O + H(+) = uridine + NH4(+). The enzyme catalyses 2'-deoxycytidine + H2O + H(+) = 2'-deoxyuridine + NH4(+). In terms of biological role, this enzyme scavenges exogenous and endogenous cytidine and 2'-deoxycytidine for UMP synthesis. This Pasteurella multocida (strain Pm70) protein is Cytidine deaminase.